A 67-amino-acid chain; its full sequence is Large ribosomal subunit protein bL31 (67 aa).

It belongs to the bacterial ribosomal protein bL31 family. Type A subfamily. In terms of assembly, part of the 50S ribosomal subunit.

Its function is as follows. Binds the 23S rRNA. The polypeptide is Large ribosomal subunit protein bL31 (Leptospira borgpetersenii serovar Hardjo-bovis (strain JB197)).